We begin with the raw amino-acid sequence, 463 residues long: Membrane-bound lytic murein transglycosylase F (463 aa).

Residues 1 to 33 (MQSQDYKKRLKLQIIIILSIAVMSCGVPNVPTA) form the signal peptide. Positions 34–272 (LSSLLERESI…VLEDKYFGHI (239 aa)) are non-LT domain. Residues 273 to 463 (RQFDYVDSRA…LVWLDEQGKI (191 aa)) are LT domain. Residue E317 is part of the active site.

In the N-terminal section; belongs to the bacterial solute-binding protein 3 family. This sequence in the C-terminal section; belongs to the transglycosylase Slt family.

Its subcellular location is the cell outer membrane. It carries out the reaction Exolytic cleavage of the (1-&gt;4)-beta-glycosidic linkage between N-acetylmuramic acid (MurNAc) and N-acetylglucosamine (GlcNAc) residues in peptidoglycan, from either the reducing or the non-reducing ends of the peptidoglycan chains, with concomitant formation of a 1,6-anhydrobond in the MurNAc residue.. In terms of biological role, murein-degrading enzyme that degrades murein glycan strands and insoluble, high-molecular weight murein sacculi, with the concomitant formation of a 1,6-anhydromuramoyl product. Lytic transglycosylases (LTs) play an integral role in the metabolism of the peptidoglycan (PG) sacculus. Their lytic action creates space within the PG sacculus to allow for its expansion as well as for the insertion of various structures such as secretion systems and flagella. This chain is Membrane-bound lytic murein transglycosylase F, found in Alteromonas mediterranea (strain DSM 17117 / CIP 110805 / LMG 28347 / Deep ecotype).